Here is a 213-residue protein sequence, read N- to C-terminus: Orotate phosphoribosyltransferase (213 aa).

Lys26 serves as a coordination point for 5-phospho-alpha-D-ribose 1-diphosphate. Phe34–Phe35 is a binding site for orotate. Residues Tyr72–Lys73, Arg99, Lys100, Lys103, His105, and Asp124–Ala132 contribute to the 5-phospho-alpha-D-ribose 1-diphosphate site. The orotate site is built by Thr128 and Arg156.

Belongs to the purine/pyrimidine phosphoribosyltransferase family. PyrE subfamily. In terms of assembly, homodimer. Mg(2+) serves as cofactor.

It catalyses the reaction orotidine 5'-phosphate + diphosphate = orotate + 5-phospho-alpha-D-ribose 1-diphosphate. It participates in pyrimidine metabolism; UMP biosynthesis via de novo pathway; UMP from orotate: step 1/2. In terms of biological role, catalyzes the transfer of a ribosyl phosphate group from 5-phosphoribose 1-diphosphate to orotate, leading to the formation of orotidine monophosphate (OMP). This Erwinia tasmaniensis (strain DSM 17950 / CFBP 7177 / CIP 109463 / NCPPB 4357 / Et1/99) protein is Orotate phosphoribosyltransferase.